A 606-amino-acid chain; its full sequence is ATP-dependent rRNA helicase SPB4 (606 aa).

The Q motif motif lies at 7–35 (WDNLGFSLLPWIRTGLDVMGFETMTPVQA). The region spanning 38 to 224 (IPMLAGNKDV…KTGLRNPVRI (187 aa)) is the Helicase ATP-binding domain. 51-58 (SVTGSGKT) is a binding site for ATP. Positions 172 to 175 (DEAD) match the DEAD box motif. A Helicase C-terminal domain is found at 248–404 (KLQLLVSILN…ELDLEVKGIT (157 aa)). At Ser254 the chain carries Phosphoserine. Positions 539–582 (KTLTKERKLERKEKMSLKRKAIEEELKAEELDENAEEERIKEDW) form a coiled coil.

It belongs to the DEAD box helicase family. DDX55/SPB4 subfamily. Component of pre-60S ribosomal complexes.

It is found in the nucleus. The protein resides in the nucleolus. It catalyses the reaction ATP + H2O = ADP + phosphate + H(+). ATP-binding RNA helicase involved in the biogenesis of 60S ribosomal subunits. Binds 90S pre-ribosomal particles and dissociates from pre-60S ribosomal particles after processing of 27SB pre-rRNA. Required for the normal formation of 18S rRNA through the processing of pre-rRNAs at sites A0, A1 and A2, and the normal formation of 25S and 5.8S rRNAs through the processing of pre-rRNAs at sites C1 and C2. Also required for recruitment of NOG2 to pre-ribosomes. This is ATP-dependent rRNA helicase SPB4 from Saccharomyces cerevisiae (strain ATCC 204508 / S288c) (Baker's yeast).